Reading from the N-terminus, the 334-residue chain is Geminin coiled-coil domain-containing protein 1 (334 aa).

The stretch at 82–119 (SQLYRNKQLQDTLVQKEEELARLHEENNHLRQYLNSAL) forms a coiled coil. The disordered stretch occupies residues 143–167 (FRKGKRKSKEQRYSPAEIPHPKNAK).

The protein belongs to the GEMC1 family. Highly phosphorylated by CDK2; stimulates initiation of DNA replication.

It localises to the nucleus. Regulator of DNA replication. Promotes initiation of chromosomal DNA replication by mediating TOPBP1- and CDK2-dependent recruitment of CDC45L onto replication origins. The protein is Geminin coiled-coil domain-containing protein 1 (GMNC) of Homo sapiens (Human).